The chain runs to 277 residues: Phosphoenolpyruvate synthase regulatory protein (277 aa).

157 to 164 is a binding site for ADP; the sequence is GVSRCGKT.

This sequence belongs to the pyruvate, phosphate/water dikinase regulatory protein family. PSRP subfamily.

It catalyses the reaction [pyruvate, water dikinase] + ADP = [pyruvate, water dikinase]-phosphate + AMP + H(+). The enzyme catalyses [pyruvate, water dikinase]-phosphate + phosphate + H(+) = [pyruvate, water dikinase] + diphosphate. In terms of biological role, bifunctional serine/threonine kinase and phosphorylase involved in the regulation of the phosphoenolpyruvate synthase (PEPS) by catalyzing its phosphorylation/dephosphorylation. This Escherichia coli O7:K1 (strain IAI39 / ExPEC) protein is Phosphoenolpyruvate synthase regulatory protein.